The following is a 214-amino-acid chain: MTPPALTPRLLLRAYALGIFPMAESRDDPEIHWVDPRRRGIFPLDGFHISRSLARRIRRMDWTVTVNEDFAGTVRACADRDDTWINPTIFRLYVGLHALGHAHSLEVREGDALVGGVYGVTLGRAFFGESMFSRRTDASKVALAFLIDRLRAGGFTLFDTQFLTPHLASLGAIEIPRADYHRRLGEALAGKAEFAPPGYSPDPASVVQRSSQTS.

The segment at 194 to 214 is disordered; it reads FAPPGYSPDPASVVQRSSQTS.

Belongs to the L/F-transferase family.

It is found in the cytoplasm. The enzyme catalyses N-terminal L-lysyl-[protein] + L-leucyl-tRNA(Leu) = N-terminal L-leucyl-L-lysyl-[protein] + tRNA(Leu) + H(+). It catalyses the reaction N-terminal L-arginyl-[protein] + L-leucyl-tRNA(Leu) = N-terminal L-leucyl-L-arginyl-[protein] + tRNA(Leu) + H(+). It carries out the reaction L-phenylalanyl-tRNA(Phe) + an N-terminal L-alpha-aminoacyl-[protein] = an N-terminal L-phenylalanyl-L-alpha-aminoacyl-[protein] + tRNA(Phe). Functionally, functions in the N-end rule pathway of protein degradation where it conjugates Leu, Phe and, less efficiently, Met from aminoacyl-tRNAs to the N-termini of proteins containing an N-terminal arginine or lysine. This chain is Leucyl/phenylalanyl-tRNA--protein transferase, found in Cereibacter sphaeroides (strain ATCC 17025 / ATH 2.4.3) (Rhodobacter sphaeroides).